Consider the following 97-residue polypeptide: Large ribosomal subunit protein bL27 (97 aa).

The disordered stretch occupies residues 1–23 (MAHKKGASSSRNGRDSTSKRLGV).

The protein belongs to the bacterial ribosomal protein bL27 family.

This Acidothermus cellulolyticus (strain ATCC 43068 / DSM 8971 / 11B) protein is Large ribosomal subunit protein bL27.